Consider the following 209-residue polypeptide: Large ribosomal subunit protein uL3 (209 aa).

Residue Q150 is modified to N5-methylglutamine.

The protein belongs to the universal ribosomal protein uL3 family. Part of the 50S ribosomal subunit. Forms a cluster with proteins L14 and L19. In terms of processing, methylated by PrmB.

One of the primary rRNA binding proteins, it binds directly near the 3'-end of the 23S rRNA, where it nucleates assembly of the 50S subunit. The chain is Large ribosomal subunit protein uL3 from Salmonella arizonae (strain ATCC BAA-731 / CDC346-86 / RSK2980).